Reading from the N-terminus, the 239-residue chain is Small ribosomal subunit protein eS6A (239 aa).

Residues serine 235 and serine 236 each carry the phosphoserine modification.

The protein belongs to the eukaryotic ribosomal protein eS6 family. Component of the small ribosomal subunit (SSU). Mature yeast ribosomes consist of a small (40S) and a large (60S) subunit. The 40S small subunit contains 1 molecule of ribosomal RNA (18S rRNA) and at least 33 different proteins. The large 60S subunit contains 3 rRNA molecules (25S, 5.8S and 5S rRNA) and at least 46 different proteins. Interacts with snoRNA U3. uS11 interacts with MPP10. Component of the ribosomal small subunit (SSU) processome composed of at least 40 protein subunits and snoRNA U3. Phosphorylated.

The protein resides in the cytoplasm. In terms of biological role, component of the ribosome, a large ribonucleoprotein complex responsible for the synthesis of proteins in the cell. The small ribosomal subunit (SSU) binds messenger RNAs (mRNAs) and translates the encoded message by selecting cognate aminoacyl-transfer RNA (tRNA) molecules. The large subunit (LSU) contains the ribosomal catalytic site termed the peptidyl transferase center (PTC), which catalyzes the formation of peptide bonds, thereby polymerizing the amino acids delivered by tRNAs into a polypeptide chain. The nascent polypeptides leave the ribosome through a tunnel in the LSU and interact with protein factors that function in enzymatic processing, targeting, and the membrane insertion of nascent chains at the exit of the ribosomal tunnel. eS6 is involved in nucleolar processing of pre-18S ribosomal RNA and ribosome assembly. This chain is Small ribosomal subunit protein eS6A (rps601), found in Schizosaccharomyces pombe (strain 972 / ATCC 24843) (Fission yeast).